A 305-amino-acid chain; its full sequence is Glycine--tRNA ligase alpha subunit (305 aa).

It belongs to the class-II aminoacyl-tRNA synthetase family. In terms of assembly, tetramer of two alpha and two beta subunits.

Its subcellular location is the cytoplasm. The enzyme catalyses tRNA(Gly) + glycine + ATP = glycyl-tRNA(Gly) + AMP + diphosphate. This chain is Glycine--tRNA ligase alpha subunit, found in Streptococcus pyogenes serotype M2 (strain MGAS10270).